The primary structure comprises 267 residues: Phosphate import ATP-binding protein PstB 2 (267 aa).

The ABC transporter domain occupies 21–262 (LSTKDVHVYY…AKLQSTNDYV (242 aa)). 53–60 (GPSGSGKS) contacts ATP.

Belongs to the ABC transporter superfamily. Phosphate importer (TC 3.A.1.7) family. As to quaternary structure, the complex is composed of two ATP-binding proteins (PstB), two transmembrane proteins (PstC and PstA) and a solute-binding protein (PstS).

The protein localises to the cell membrane. It carries out the reaction phosphate(out) + ATP + H2O = ADP + 2 phosphate(in) + H(+). Functionally, part of the ABC transporter complex PstSACB involved in phosphate import. Responsible for energy coupling to the transport system. This Streptococcus pneumoniae serotype 4 (strain ATCC BAA-334 / TIGR4) protein is Phosphate import ATP-binding protein PstB 2.